The following is a 262-amino-acid chain: MTSTVIDIPDTVRAKIDVRNLNFYYNQFHALKNINMSIPDRKVTAFIGPSGCGKSTLLRTFNKMYALYPEQRAEGEISMDGENLLTSKQDISLLRAKVGMVFQKPTPFPMSIYDNIAFGVRLFEKLSRSEMDDRVEWALSKAALWNEAKDKLHQSGYGLSGGQQQRLCIARGIAIRPEVLLLDEPCSALDPISTGRIEELIAELKDEYTVVIVTHNMQQAARCSDYTAYMYLGELIEFGETEKIFIKPHRKETEDYITGRFG.

Residues I16–I257 form the ABC transporter domain. G48 to S55 provides a ligand contact to ATP.

This sequence belongs to the ABC transporter superfamily. Phosphate importer (TC 3.A.1.7) family. The complex is composed of two ATP-binding proteins (PstB), two transmembrane proteins (PstC and PstA) and a solute-binding protein (PstS).

It localises to the cell inner membrane. It catalyses the reaction phosphate(out) + ATP + H2O = ADP + 2 phosphate(in) + H(+). Functionally, part of the ABC transporter complex PstSACB involved in phosphate import. Responsible for energy coupling to the transport system. This is Phosphate import ATP-binding protein PstB from Cupriavidus metallidurans (strain ATCC 43123 / DSM 2839 / NBRC 102507 / CH34) (Ralstonia metallidurans).